Here is a 670-residue protein sequence, read N- to C-terminus: DNA ligase (670 aa).

NAD(+) is bound by residues 34–38, 83–84, and E117; these read DAEYD and SL. Catalysis depends on K119, which acts as the N6-AMP-lysine intermediate. Positions 140, 177, 293, and 317 each coordinate NAD(+). The Zn(2+) site is built by C411, C414, C429, and C434. Residues 591-670 form the BRCT domain; the sequence is KVGGRFTGKT…DEFLAMLEEG (80 aa).

The protein belongs to the NAD-dependent DNA ligase family. LigA subfamily. It depends on Mg(2+) as a cofactor. Mn(2+) is required as a cofactor.

It catalyses the reaction NAD(+) + (deoxyribonucleotide)n-3'-hydroxyl + 5'-phospho-(deoxyribonucleotide)m = (deoxyribonucleotide)n+m + AMP + beta-nicotinamide D-nucleotide.. DNA ligase that catalyzes the formation of phosphodiester linkages between 5'-phosphoryl and 3'-hydroxyl groups in double-stranded DNA using NAD as a coenzyme and as the energy source for the reaction. It is essential for DNA replication and repair of damaged DNA. This is DNA ligase from Geobacter sulfurreducens (strain ATCC 51573 / DSM 12127 / PCA).